Here is a 1400-residue protein sequence, read N- to C-terminus: DNA-directed RNA polymerase subunit beta' (1400 aa).

Positions 71, 73, 86, and 89 each coordinate Zn(2+). Mg(2+) is bound by residues D462, D464, and D466. Residues C811, C885, C892, and C895 each coordinate Zn(2+).

It belongs to the RNA polymerase beta' chain family. In terms of assembly, the RNAP catalytic core consists of 2 alpha, 1 beta, 1 beta' and 1 omega subunit. When a sigma factor is associated with the core the holoenzyme is formed, which can initiate transcription. It depends on Mg(2+) as a cofactor. The cofactor is Zn(2+).

It catalyses the reaction RNA(n) + a ribonucleoside 5'-triphosphate = RNA(n+1) + diphosphate. Its function is as follows. DNA-dependent RNA polymerase catalyzes the transcription of DNA into RNA using the four ribonucleoside triphosphates as substrates. In Brucella suis (strain ATCC 23445 / NCTC 10510), this protein is DNA-directed RNA polymerase subunit beta'.